A 215-amino-acid chain; its full sequence is Large ribosomal subunit protein uL4 (215 aa).

The segment at 46-72 (TAKSKNRAEVSGGGRKPWAQKGGGRAR) is disordered. Positions 56-71 (SGGGRKPWAQKGGGRA) are enriched in gly residues.

This sequence belongs to the universal ribosomal protein uL4 family. As to quaternary structure, part of the 50S ribosomal subunit.

Its function is as follows. One of the primary rRNA binding proteins, this protein initially binds near the 5'-end of the 23S rRNA. It is important during the early stages of 50S assembly. It makes multiple contacts with different domains of the 23S rRNA in the assembled 50S subunit and ribosome. In terms of biological role, forms part of the polypeptide exit tunnel. The chain is Large ribosomal subunit protein uL4 from Helicobacter pylori (strain Shi470).